We begin with the raw amino-acid sequence, 490 residues long: MINYLFTITTWLIIISYWFIIIIVTCRILSKRRAISSSAAWLLVIYIIPFIGICTWFLLEEPYLGTRKLKLIKSVWSKKNKHFNNLKSHNYIFENNNSEVARSLFKLCKYRQGISGIKFNKLKLLKNTKDVIKNLVRDIYLAKNTIEIVFYIWKPGGLADNVAIALIQSAKRGIKCRLMLDSAGSLEFFRSKWVDMMQQSGIQIVEALKINLLHFFFRRMDLRQHRKFILIDNYITYIGSMNLVDPYLFKKSLGIGQWIDLMTRIEGPISTTMGAIYSCDWEVETGQQISPKRVKNNLIIPTYPIKECTSIVQVIASGPGFTEDMIHQALLTAIYSAQQKLTMTTPYLVPSDDLLRAICTAAQRGVEVILIIPKSHDSLLVKWASRVFFSELLESGVKIYQFKKGLLHSKSVLVDKQLSLIGTVNLDMRSLWLNFEITLVIDDKNFGKSLAIIHNEYISHSSLLDPKLWKIRSYWKKIIEKLFYFLSPLL.

2 helical membrane-spanning segments follow: residues 4–24 and 39–59; these read YLFT…IIIV and AAWL…WFLL. PLD phosphodiesterase domains follow at residues 220-247 and 403-430; these read MDLR…VDPY and KKGL…DMRS. Active-site residues include H225, K227, D232, H408, K410, and D415.

Belongs to the phospholipase D family. Cardiolipin synthase subfamily. ClsA sub-subfamily.

The protein resides in the cell membrane. The enzyme catalyses 2 a 1,2-diacyl-sn-glycero-3-phospho-(1'-sn-glycerol) = a cardiolipin + glycerol. Functionally, catalyzes the reversible phosphatidyl group transfer from one phosphatidylglycerol molecule to another to form cardiolipin (CL) (diphosphatidylglycerol) and glycerol. This is Cardiolipin synthase A from Buchnera aphidicola subsp. Baizongia pistaciae (strain Bp).